The following is a 570-amino-acid chain: Glycine--tRNA ligase (570 aa).

Substrate-binding residues include Arg-99 and Glu-165. Residues 197 to 199 (RNE), 207 to 212 (LRLREF), 324 to 325 (EC), and 443 to 446 (GIDR) each bind ATP. 212–216 (FSQAE) lines the substrate pocket. 439–443 (EPSFG) is a binding site for substrate.

It belongs to the class-II aminoacyl-tRNA synthetase family.

It is found in the cytoplasm. It catalyses the reaction tRNA(Gly) + glycine + ATP = glycyl-tRNA(Gly) + AMP + diphosphate. Functionally, catalyzes the attachment of glycine to tRNA(Gly). This Thermococcus sibiricus (strain DSM 12597 / MM 739) protein is Glycine--tRNA ligase.